Reading from the N-terminus, the 513-residue chain is ATP synthase subunit alpha (513 aa).

An ATP-binding site is contributed by 169–176; sequence GDRQTGKT.

This sequence belongs to the ATPase alpha/beta chains family. F-type ATPases have 2 components, CF(1) - the catalytic core - and CF(0) - the membrane proton channel. CF(1) has five subunits: alpha(3), beta(3), gamma(1), delta(1), epsilon(1). CF(0) has three main subunits: a(1), b(2) and c(9-12). The alpha and beta chains form an alternating ring which encloses part of the gamma chain. CF(1) is attached to CF(0) by a central stalk formed by the gamma and epsilon chains, while a peripheral stalk is formed by the delta and b chains.

The protein resides in the cell inner membrane. The catalysed reaction is ATP + H2O + 4 H(+)(in) = ADP + phosphate + 5 H(+)(out). Its function is as follows. Produces ATP from ADP in the presence of a proton gradient across the membrane. The alpha chain is a regulatory subunit. In Bordetella avium (strain 197N), this protein is ATP synthase subunit alpha.